The primary structure comprises 257 residues: Small ribosomal subunit protein uS3 (257 aa).

Residues Ile-40–Gln-110 enclose the KH type-2 domain. The interval Ala-223–Glu-257 is disordered. Residues Ser-231–Asn-246 are compositionally biased toward basic residues.

The protein belongs to the universal ribosomal protein uS3 family. As to quaternary structure, part of the 30S ribosomal subunit. Forms a tight complex with proteins S10 and S14.

Binds the lower part of the 30S subunit head. Binds mRNA in the 70S ribosome, positioning it for translation. This is Small ribosomal subunit protein uS3 from Ureaplasma parvum serovar 3 (strain ATCC 27815 / 27 / NCTC 11736).